The primary structure comprises 1263 residues: Histone-lysine N-methyltransferase EHMT2 (1263 aa).

2 disordered regions span residues 1-314 (MRGL…LEEW) and 332-439 (DERV…EYME). The segment covering 26 to 39 (GRGRGGAHRGRGRP) has biased composition (basic residues). Arg-40 is modified (asymmetric dimethylarginine). The span at 83-95 (LEKEPRGAAERVH) shows a compositional bias: basic and acidic residues. Ser-97 is subject to Phosphoserine. Thr-101 is modified (phosphothreonine). Ser-104 and Ser-193 each carry phosphoserine. Lys-239 carries the post-translational modification N6,N6,N6-trimethyllysine; by EHMT2; alternate. Lys-239 is subject to N6,N6-dimethyllysine; by EHMT2; alternate. Positions 252-270 (PEKRPPEVQHFRMSDDMHL) are enriched in basic and acidic residues. Residues Lys-272 and Lys-282 each participate in a glycyl lysine isopeptide (Lys-Gly) (interchain with G-Cter in SUMO2) cross-link. Ser-285, Ser-294, and Ser-298 each carry phosphoserine. Basic and acidic residues-rich tracts occupy residues 302–312 (ILEKGEPRPLE) and 332–343 (DERVDSDSKSEV). The span at 350 to 380 (LSEEEEEEEEEEEEEEEEEEEEEEEEEDEES) shows a compositional bias: acidic residues. Basic residues predominate over residues 391–400 (GRRKAKKKWR). Phosphoserine is present on residues Ser-403, Ser-465, and Ser-466. A Phosphothreonine modification is found at Thr-608. The tract at residues 621–647 (LAHDAPGRADTSQPSARMRGHGEPRRP) is disordered. Lys-687 is covalently cross-linked (Glycyl lysine isopeptide (Lys-Gly) (interchain with G-Cter in SUMO2)). ANK repeat units follow at residues 702-731 (FHPR…DPNF), 737-766 (SKRT…NINA), 770-799 (QQRT…CVYS), 803-833 (DGST…DVNA), 837-866 (GGWT…DVTL), 870-899 (EENI…DLHA), and 903-932 (HGDT…NPEL). Residues 870 to 872 (EEN) form a histone H3K9me binding region. The region spanning 1025-1088 (QHCTCVDDCS…SCKNRVVQSG (64 aa)) is the Pre-SET domain. Residues Cys-1027, Cys-1029, Cys-1033, Cys-1038, Cys-1040, Cys-1070, Cys-1074, Cys-1076, and Cys-1080 each coordinate Zn(2+). In terms of domain architecture, SET spans 1091–1208 (VRLQLYRTAK…TGEELGFDYG (118 aa)). Residues 1101–1103 (MGW), Tyr-1138, and 1165–1166 (NH) each bind S-adenosyl-L-methionine. The tract at residues 1127–1146 (DAEADVREDDSYLFDLDNKD) is interaction with histone H3. Cys-1168 contacts Zn(2+). Positions 1207 to 1210 (YGDR) are interaction with histone H3. The 17-residue stretch at 1217 to 1233 (KYFTCQCGSEKCKHSAE) folds into the Post-SET domain. Zn(2+) is bound by residues Cys-1221, Cys-1223, and Cys-1228. Ser-1257 carries the post-translational modification Phosphoserine. At Thr-1263 the chain carries Phosphothreonine.

It belongs to the class V-like SAM-binding methyltransferase superfamily. Histone-lysine methyltransferase family. Suvar3-9 subfamily. In terms of assembly, heterodimer; heterodimerizes with EHMT1/GLP. Interacts with GFI1B and WIZ. Part of the E2F6.com-1 complex in G0 phase composed of E2F6, MGA, MAX, TFDP1, CBX3, BAT8, EHMT1, RING1, RNF2, MBLR, L3MBTL2 and YAF2. Part of a complex composed of TRIM28, HDAC1, HDAC2 and EHMT2. Interacts with UHRF1. Interacts with CDYL. Interacts with REST only in the presence of CDYL. Part of a complex containing at least CDYL, REST, WIZ, SETB1, EHMT1 and EHMT2. Interacts with PRDM9 and CDYL; interaction only takes place when PRDM9 is bound to hotspot DNA. Interacts with SMYD5. Methylated at Lys-239; automethylated. As to expression, ubiquitous.

It is found in the nucleus. The protein localises to the chromosome. It carries out the reaction N(6)-methyl-L-lysyl(9)-[histone H3] + S-adenosyl-L-methionine = N(6),N(6)-dimethyl-L-lysyl(9)-[histone H3] + S-adenosyl-L-homocysteine + H(+). The catalysed reaction is L-lysyl(9)-[histone H3] + S-adenosyl-L-methionine = N(6)-methyl-L-lysyl(9)-[histone H3] + S-adenosyl-L-homocysteine + H(+). Functionally, histone methyltransferase that specifically mono- and dimethylates 'Lys-9' of histone H3 (H3K9me1 and H3K9me2, respectively) in euchromatin. H3K9me represents a specific tag for epigenetic transcriptional repression by recruiting HP1 proteins to methylated histones. Also mediates monomethylation of 'Lys-56' of histone H3 (H3K56me1) in G1 phase, leading to promote interaction between histone H3 and PCNA and regulating DNA replication. Also weakly methylates 'Lys-27' of histone H3 (H3K27me). Also required for DNA methylation, the histone methyltransferase activity is not required for DNA methylation, suggesting that these 2 activities function independently. Probably targeted to histone H3 by different DNA-binding proteins like E2F6, MGA, MAX and/or DP1. May also methylate histone H1. In addition to the histone methyltransferase activity, also methylates non-histone proteins: mediates dimethylation of 'Lys-373' of p53/TP53. Also methylates CDYL, WIZ, ACIN1, DNMT1, HDAC1, ERCC6, KLF12 and itself. The sequence is that of Histone-lysine N-methyltransferase EHMT2 (Ehmt2) from Mus musculus (Mouse).